We begin with the raw amino-acid sequence, 390 residues long: MKFVDEATIKVDAGDGGNGVVSFWREKFVAKGGPDGGDGGDGGDVYLEADENLNTLIDYRFNRFYNAERGKNGSGGNCTGKRGEDITLKVPVGTRAIDIDTGEKVAELMTHGMKQMVAKGGWHGLGNTRFKSSVNRAPRQKTLGTKGEVRELRLELLLLADVGMLGLPNAGKSTFIRAVSAAKPKVADYPFTTLIPSLGVVRARGNKSFVVADIPGLIEGAADGAGLGVRFLKHLERCRVLLHVIDILPIDGSDPVQNALTIIDELEQYSEKVASKPRWLLFNKTDLLLEEEADEKINEILEALAWEDRYFKIAAVSRTGTQELCDELADFMDTLPKEIQTEEEKAANKVDFMWDDYHKDAMSGKDVVTEDDWDDWDDEEDDGHVIYVRD.

The region spanning 1-159 (MKFVDEATIK…RELRLELLLL (159 aa)) is the Obg domain. The region spanning 160 to 333 (ADVGMLGLPN…LCDELADFMD (174 aa)) is the OBG-type G domain. GTP is bound by residues 166-173 (GLPNAGKS), 191-195 (FTTLI), 213-216 (DIPG), 283-286 (NKTD), and 314-316 (AAV). 2 residues coordinate Mg(2+): serine 173 and threonine 193.

This sequence belongs to the TRAFAC class OBG-HflX-like GTPase superfamily. OBG GTPase family. As to quaternary structure, monomer. Requires Mg(2+) as cofactor.

The protein resides in the cytoplasm. Functionally, an essential GTPase which binds GTP, GDP and possibly (p)ppGpp with moderate affinity, with high nucleotide exchange rates and a fairly low GTP hydrolysis rate. Plays a role in control of the cell cycle, stress response, ribosome biogenesis and in those bacteria that undergo differentiation, in morphogenesis control. This Aliivibrio fischeri (strain ATCC 700601 / ES114) (Vibrio fischeri) protein is GTPase Obg.